The sequence spans 355 residues: Uroporphyrinogen decarboxylase (355 aa).

Substrate is bound by residues 27–31 (RQAGR), D77, Y154, T209, and H327.

Belongs to the uroporphyrinogen decarboxylase family. Homodimer.

Its subcellular location is the cytoplasm. It carries out the reaction uroporphyrinogen III + 4 H(+) = coproporphyrinogen III + 4 CO2. It functions in the pathway porphyrin-containing compound metabolism; protoporphyrin-IX biosynthesis; coproporphyrinogen-III from 5-aminolevulinate: step 4/4. Catalyzes the decarboxylation of four acetate groups of uroporphyrinogen-III to yield coproporphyrinogen-III. The sequence is that of Uroporphyrinogen decarboxylase from Aeromonas salmonicida (strain A449).